We begin with the raw amino-acid sequence, 698 residues long: Polyribonucleotide nucleotidyltransferase (698 aa).

Mg(2+) contacts are provided by aspartate 490 and aspartate 496. One can recognise a KH domain in the interval 558-617 (PVIYTMRIPQDKIGALIGPGGKNIKRITETTDTKIDINDDGVVQIAAVNGDKLAMAKAEI). An S1 motif domain is found at 627-695 (NKIYKGKVVS…NNGKVRLSRK (69 aa)).

This sequence belongs to the polyribonucleotide nucleotidyltransferase family. Mg(2+) is required as a cofactor.

It is found in the cytoplasm. The catalysed reaction is RNA(n+1) + phosphate = RNA(n) + a ribonucleoside 5'-diphosphate. Its function is as follows. Involved in mRNA degradation. Catalyzes the phosphorolysis of single-stranded polyribonucleotides processively in the 3'- to 5'-direction. In Elusimicrobium minutum (strain Pei191), this protein is Polyribonucleotide nucleotidyltransferase.